Consider the following 307-residue polypeptide: Sporulation sigma-E factor-processing peptidase (307 aa).

5 consecutive transmembrane segments (helical) span residues 7 to 27, 36 to 56, 57 to 77, 89 to 109, and 127 to 147; these read LIWMLNFGLDTILLMLCAVVL, LLLGGFIGSLIVLLMFTPFSH, LMVHPAIKILFSFFMVLMTFG, LTFYFATFVVGGGLMGVHFLF, and FGDPISWIFVLIGFPLLSYFS. The active site involves Asp183.

This sequence belongs to the peptidase U4 family. Self-associates. Interacts with SigE. Interacts with SpoIIR.

It localises to the cell membrane. Functionally, probable aspartic protease that is responsible for the proteolytic cleavage of the RNA polymerase sigma E factor (SigE/spoIIGB) to yield the active peptide in the mother cell during sporulation. Responds to a signal from the forespore that is triggered by the extracellular signal protein SpoIIR. The polypeptide is Sporulation sigma-E factor-processing peptidase (Priestia megaterium (strain ATCC 12872 / QMB1551) (Bacillus megaterium)).